A 567-amino-acid polypeptide reads, in one-letter code: CTD small phosphatase-like protein 2 (567 aa).

Disordered stretches follow at residues 31-53 (QQQQHQHEDTDSPKKKKLRHQCE), 100-150 (ASST…FSSV), and 280-361 (NKEN…EEFN). Composition is skewed to low complexity over residues 100–118 (ASSTSSISPSSSQSSSPLK), 130–150 (SMNDSTSSSSSSNNNNNFSSV), and 286–297 (ESNNSNSNSNSS). Residues 298–308 (PSFFHNLQQHP) show a composition bias toward polar residues. Low complexity predominate over residues 309-332 (TSAATTTTTTTTTITTTSATTSII). The segment covering 337–360 (NSDDEIDDECDDESEEEEEDEEEF) has biased composition (acidic residues). Positions 386 to 544 (HSSPKISLVL…LQLVPFLESL (159 aa)) constitute an FCP1 homology domain.

It belongs to the CTDSPL2 family.

Probable phosphatase. The chain is CTD small phosphatase-like protein 2 (ctdspl2) from Dictyostelium discoideum (Social amoeba).